The primary structure comprises 220 residues: 7-cyano-7-deazaguanine synthase (220 aa).

Position 10-20 (10-20 (FSGGQDSTTCL)) interacts with ATP. 4 residues coordinate Zn(2+): C186, C195, C198, and C201.

Belongs to the QueC family. In terms of assembly, homodimer. Zn(2+) is required as a cofactor.

The catalysed reaction is 7-carboxy-7-deazaguanine + NH4(+) + ATP = 7-cyano-7-deazaguanine + ADP + phosphate + H2O + H(+). It functions in the pathway purine metabolism; 7-cyano-7-deazaguanine biosynthesis. In terms of biological role, catalyzes the ATP-dependent conversion of 7-carboxy-7-deazaguanine (CDG) to 7-cyano-7-deazaguanine (preQ(0)). In Bacillus cereus (strain ATCC 14579 / DSM 31 / CCUG 7414 / JCM 2152 / NBRC 15305 / NCIMB 9373 / NCTC 2599 / NRRL B-3711), this protein is 7-cyano-7-deazaguanine synthase.